A 313-amino-acid polypeptide reads, in one-letter code: MNTFSQVWVFSDTPSRLPELMNGAQALANQINTFVLNDADGAQAIQLGANHVWKLNGKPNDRMIEDYAGVIADTIRQHGADGLVLLPNTRRGKLLAAKLGYRLNAAVSNDASTVSVQDGKATVKHMVYGGLAIGEERIATPYAVLTISSGTFDVAQPDASRTGETHTVEWQAPAVAITRTATQARQSNSVDLDKARLVVSVGRGIGSKENIALAEQLCKAIGAELACSRPVAENEKWMEHERYVGISNLMLKPELYLAVGISGQIQHMVGANASQTIFAINKDKNAPIFQYADYGIVGDAVKILPALTAALAR.

255–283 (LYLAVGISGQIQHMVGANASQTIFAINKD) is an FAD binding site.

This sequence belongs to the ETF alpha-subunit/FixB family. In terms of assembly, heterodimer of FixA and FixB.

It functions in the pathway amine and polyamine metabolism; carnitine metabolism. Its function is as follows. Required for anaerobic carnitine reduction. May bring reductant to CaiA. This chain is Protein FixB, found in Escherichia coli O6:K15:H31 (strain 536 / UPEC).